The chain runs to 1401 residues: DNA-directed RNA polymerase subunit beta' (1401 aa).

Zn(2+) is bound by residues Cys-70, Cys-72, Cys-85, and Cys-88. Mg(2+) contacts are provided by Asp-460, Asp-462, and Asp-464. The Zn(2+) site is built by Cys-814, Cys-888, Cys-895, and Cys-898. Residues 1369–1388 (RQKQKAVEQEGPSAEQATDN) are disordered.

It belongs to the RNA polymerase beta' chain family. As to quaternary structure, the RNAP catalytic core consists of 2 alpha, 1 beta, 1 beta' and 1 omega subunit. When a sigma factor is associated with the core the holoenzyme is formed, which can initiate transcription. Requires Mg(2+) as cofactor. Zn(2+) is required as a cofactor.

It catalyses the reaction RNA(n) + a ribonucleoside 5'-triphosphate = RNA(n+1) + diphosphate. In terms of biological role, DNA-dependent RNA polymerase catalyzes the transcription of DNA into RNA using the four ribonucleoside triphosphates as substrates. The sequence is that of DNA-directed RNA polymerase subunit beta' from Aliivibrio fischeri (strain ATCC 700601 / ES114) (Vibrio fischeri).